We begin with the raw amino-acid sequence, 458 residues long: Adenylosuccinate synthetase (458 aa).

GTP contacts are provided by residues Gly17–Lys23 and Gly45–Thr47. Asp18 acts as the Proton acceptor in catalysis. Residues Asp18 and Gly45 each coordinate Mg(2+). IMP contacts are provided by residues Asp18–Lys21, Asn43–His46, Thr137, Arg151, Gln247, Thr262, and Arg330. The Proton donor role is filled by His46. Residue Val326–Arg332 participates in substrate binding. Residues Arg332, Lys358–Asp360, and Ser440–Ser442 each bind GTP.

The protein belongs to the adenylosuccinate synthetase family. In terms of assembly, homodimer. Requires Mg(2+) as cofactor.

It is found in the cytoplasm. It catalyses the reaction IMP + L-aspartate + GTP = N(6)-(1,2-dicarboxyethyl)-AMP + GDP + phosphate + 2 H(+). It functions in the pathway purine metabolism; AMP biosynthesis via de novo pathway; AMP from IMP: step 1/2. In terms of biological role, plays an important role in the de novo pathway of purine nucleotide biosynthesis. Catalyzes the first committed step in the biosynthesis of AMP from IMP. The polypeptide is Adenylosuccinate synthetase (Verminephrobacter eiseniae (strain EF01-2)).